The primary structure comprises 367 residues: Heparan sulfate glucosamine 3-O-sulfotransferase 2 (367 aa).

At 1-19 the chain is on the cytoplasmic side; it reads MAYRVLGRAGPPQPRRARR. A helical; Signal-anchor for type II membrane protein transmembrane segment spans residues 20–39; sequence LLFAFTLSLSCTYLCYSFLC. The Lumenal segment spans residues 40-367; sequence CCDDLGRSRL…ETVGQDFRWE (328 aa). A disordered region spans residues 61–110; that stretch reads AGGQKLLQKSRPCDPSGPTPSEPSAPSAPAAAVPAPRLSGSNHSGSPKLG. Residues 84-96 are compositionally biased toward low complexity; the sequence is SAPSAPAAAVPAP. The N-linked (GlcNAc...) asparagine glycan is linked to Asn102. Residue 124–128 coordinates 3'-phosphoadenylyl sulfate; sequence KGGTR. Substrate contacts are provided by residues 146 to 152 and 177 to 180; these read EPHFFDR and KTPS. Asn193 carries N-linked (GlcNAc...) asparagine glycosylation. 3'-phosphoadenylyl sulfate is bound by residues Arg205 and Ser213. N-linked (GlcNAc...) asparagine glycosylation is present at Asn235. 245-246 serves as a coordination point for substrate; that stretch reads WN. Asn306 carries an N-linked (GlcNAc...) asparagine glycan. Cys313 and Cys325 form a disulfide bridge. 330-334 is a binding site for 3'-phosphoadenylyl sulfate; sequence KGRTH.

It belongs to the sulfotransferase 1 family. Highly expressed in the brain and weakly expressed in the heart, placenta, lung and skeletal muscle.

The protein resides in the golgi apparatus membrane. It carries out the reaction alpha-D-glucosaminyl-[heparan sulfate](n) + 3'-phosphoadenylyl sulfate = 3-sulfo-alpha-D-glucosaminyl-[heparan sulfate](n) + adenosine 3',5'-bisphosphate + H(+). Functionally, sulfotransferase that utilizes 3'-phospho-5'-adenylyl sulfate (PAPS) to catalyze the transfer of a sulfo group to an N-unsubstituted glucosamine linked to a 2-O-sulfo iduronic acid unit on heparan sulfate. Catalyzes the O-sulfation of glucosamine in GlcA2S-GlcNS. Unlike HS3ST1/3-OST-1, does not convert non-anticoagulant heparan sulfate to anticoagulant heparan sulfate. This Homo sapiens (Human) protein is Heparan sulfate glucosamine 3-O-sulfotransferase 2 (HS3ST2).